The sequence spans 56 residues: Potassium channel toxin alpha-KTx 9.2 (56 aa).

Positions methionine 1–alanine 28 are cleaved as a signal peptide. 3 disulfides stabilise this stretch: cysteine 31–cysteine 47, cysteine 34–cysteine 52, and cysteine 38–cysteine 54.

Expressed by the venom gland.

It localises to the secreted. Blocks small conductance calcium-activated potassium channels (KCNN, SK). Low toxicity by intracerebroventricular injection into mice. This chain is Potassium channel toxin alpha-KTx 9.2, found in Olivierus martensii (Manchurian scorpion).